The chain runs to 159 residues: Globin-like protein (159 aa).

Positions 1-152 (MSMNRQEISD…FNAESQTHLK (152 aa)) constitute a Globin domain. H101 is a heme binding site.

This sequence belongs to the globin family. As to quaternary structure, homodimer. Expressed mainly in a subset of neuronal cells and in head muscular tissue.

It localises to the cytoplasm. May be a globin and may play a role in oxygen transport. The chain is Globin-like protein (glb-1) from Caenorhabditis elegans.